The primary structure comprises 380 residues: DNA replication and repair protein RecF (380 aa).

Position 30–37 (30–37 (GENAQGKT)) interacts with ATP.

This sequence belongs to the RecF family.

It localises to the cytoplasm. Its function is as follows. The RecF protein is involved in DNA metabolism; it is required for DNA replication and normal SOS inducibility. RecF binds preferentially to single-stranded, linear DNA. It also seems to bind ATP. In Synechococcus sp. (strain JA-2-3B'a(2-13)) (Cyanobacteria bacterium Yellowstone B-Prime), this protein is DNA replication and repair protein RecF.